The following is a 116-amino-acid chain: NADH-ubiquinone oxidoreductase chain 3 (116 aa).

Helical transmembrane passes span 3–23 (LIST…LVSF), 56–76 (FFLI…LLPL), and 87–107 (LTFM…IYEW).

This sequence belongs to the complex I subunit 3 family.

It is found in the mitochondrion membrane. The enzyme catalyses a ubiquinone + NADH + 5 H(+)(in) = a ubiquinol + NAD(+) + 4 H(+)(out). Core subunit of the mitochondrial membrane respiratory chain NADH dehydrogenase (Complex I) that is believed to belong to the minimal assembly required for catalysis. Complex I functions in the transfer of electrons from NADH to the respiratory chain. The immediate electron acceptor for the enzyme is believed to be ubiquinone. The sequence is that of NADH-ubiquinone oxidoreductase chain 3 (MT-ND3) from Gadus morhua (Atlantic cod).